The following is a 554-amino-acid chain: (+)-delta-cadinene synthase isozyme XC1 (554 aa).

The segment covering 1–16 (MASQVSQMPSSSPLSS) has biased composition (low complexity). Residues 1–23 (MASQVSQMPSSSPLSSNKDEMRP) are disordered. Asp307, Asp311, Asp451, and Glu455 together coordinate Mg(2+). The DDXXD motif signature appears at 307 to 311 (DDTYD).

The protein belongs to the terpene synthase family. It depends on Mg(2+) as a cofactor.

The enzyme catalyses (2E,6E)-farnesyl diphosphate = (1S,8aR)-delta-cadinene + diphosphate. It functions in the pathway secondary metabolite biosynthesis; terpenoid biosynthesis. Responsible for the cyclization of trans,trans-farnesyl diphosphate (FPP) to (+)-delta cadinene. This is (+)-delta-cadinene synthase isozyme XC1 from Gossypium arboreum (Tree cotton).